The chain runs to 181 residues: uncharacterized protein (181 aa).

To M.pneumoniae MPN_635 C-terminal region.

This is an uncharacterized protein from Mycoplasma pneumoniae (strain ATCC 29342 / M129 / Subtype 1) (Mycoplasmoides pneumoniae).